Consider the following 501-residue polypeptide: NAD(P)H-quinone oxidoreductase subunit 2, chloroplastic (501 aa).

Transmembrane regions (helical) follow at residues 15-35 (ILPE…DLTF), 40-60 (TIWL…ILLF), 82-102 (IFQS…IEYI), 107-127 (MAIP…MFLC), 132-152 (LVTI…LCGY), 167-187 (LLIG…LYGL), 212-232 (TFIA…LVPF), 244-264 (PTPV…ALAT), 278-298 (WKIF…LVAI), 307-327 (LAYS…TGDL), 333-353 (MTIY…CIIL), 378-398 (FSLT…GFFG), 410-430 (GFYL…YYYL), and 466-486 (FVMI…NPIF).

It belongs to the complex I subunit 2 family. NDH is composed of at least 16 different subunits, 5 of which are encoded in the nucleus.

Its subcellular location is the plastid. It localises to the chloroplast thylakoid membrane. It catalyses the reaction a plastoquinone + NADH + (n+1) H(+)(in) = a plastoquinol + NAD(+) + n H(+)(out). The enzyme catalyses a plastoquinone + NADPH + (n+1) H(+)(in) = a plastoquinol + NADP(+) + n H(+)(out). In terms of biological role, NDH shuttles electrons from NAD(P)H:plastoquinone, via FMN and iron-sulfur (Fe-S) centers, to quinones in the photosynthetic chain and possibly in a chloroplast respiratory chain. The immediate electron acceptor for the enzyme in this species is believed to be plastoquinone. Couples the redox reaction to proton translocation, and thus conserves the redox energy in a proton gradient. This is NAD(P)H-quinone oxidoreductase subunit 2, chloroplastic from Marchantia polymorpha (Common liverwort).